A 517-amino-acid polypeptide reads, in one-letter code: Ribonuclease Y (517 aa).

Residues 1–21 (MIEVLIGLGAGVAGVGAGYLY) traverse the membrane as a helical segment. Residues 207-273 (LINVVNIKND…TRVIELLVED (67 aa)) enclose the KH domain. The 94-residue stretch at 333–426 (ALAHSLEVAH…VCAADCLSAA (94 aa)) folds into the HD domain.

It belongs to the RNase Y family.

Its subcellular location is the cell membrane. Functionally, endoribonuclease that initiates mRNA decay. The chain is Ribonuclease Y from Campylobacter curvus (strain 525.92).